The sequence spans 113 residues: Large ribosomal subunit protein uL22 (113 aa).

The protein belongs to the universal ribosomal protein uL22 family. In terms of assembly, part of the 50S ribosomal subunit.

Functionally, this protein binds specifically to 23S rRNA; its binding is stimulated by other ribosomal proteins, e.g. L4, L17, and L20. It is important during the early stages of 50S assembly. It makes multiple contacts with different domains of the 23S rRNA in the assembled 50S subunit and ribosome. Its function is as follows. The globular domain of the protein is located near the polypeptide exit tunnel on the outside of the subunit, while an extended beta-hairpin is found that lines the wall of the exit tunnel in the center of the 70S ribosome. The polypeptide is Large ribosomal subunit protein uL22 (Bacillus cytotoxicus (strain DSM 22905 / CIP 110041 / 391-98 / NVH 391-98)).